Here is a 192-residue protein sequence, read N- to C-terminus: Peptidyl-tRNA hydrolase (192 aa).

Position 17 (tyrosine 17) interacts with tRNA. The Proton acceptor role is filled by histidine 22. Tyrosine 68, asparagine 70, and asparagine 116 together coordinate tRNA.

It belongs to the PTH family. As to quaternary structure, monomer.

The protein resides in the cytoplasm. It carries out the reaction an N-acyl-L-alpha-aminoacyl-tRNA + H2O = an N-acyl-L-amino acid + a tRNA + H(+). In terms of biological role, hydrolyzes ribosome-free peptidyl-tRNAs (with 1 or more amino acids incorporated), which drop off the ribosome during protein synthesis, or as a result of ribosome stalling. Its function is as follows. Catalyzes the release of premature peptidyl moieties from peptidyl-tRNA molecules trapped in stalled 50S ribosomal subunits, and thus maintains levels of free tRNAs and 50S ribosomes. The chain is Peptidyl-tRNA hydrolase from Mycolicibacterium gilvum (strain PYR-GCK) (Mycobacterium gilvum (strain PYR-GCK)).